A 447-amino-acid polypeptide reads, in one-letter code: Glutamyl-tRNA(Gln) amidotransferase subunit A (447 aa).

Active-site charge relay system residues include Lys-51 and Ser-126. Ser-150 acts as the Acyl-ester intermediate in catalysis.

It belongs to the amidase family. GatA subfamily. Heterotrimer of A, B and C subunits.

The enzyme catalyses L-glutamyl-tRNA(Gln) + L-glutamine + ATP + H2O = L-glutaminyl-tRNA(Gln) + L-glutamate + ADP + phosphate + H(+). Allows the formation of correctly charged Gln-tRNA(Gln) through the transamidation of misacylated Glu-tRNA(Gln) in organisms which lack glutaminyl-tRNA synthetase. The reaction takes place in the presence of glutamine and ATP through an activated gamma-phospho-Glu-tRNA(Gln). The protein is Glutamyl-tRNA(Gln) amidotransferase subunit A of Helicobacter hepaticus (strain ATCC 51449 / 3B1).